Here is a 214-residue protein sequence, read N- to C-terminus: Probable septum site-determining protein MinC (214 aa).

This sequence belongs to the MinC family. In terms of assembly, interacts with MinD and FtsZ.

Its function is as follows. Cell division inhibitor that blocks the formation of polar Z ring septums. Rapidly oscillates between the poles of the cell to destabilize FtsZ filaments that have formed before they mature into polar Z rings. Prevents FtsZ polymerization. The protein is Probable septum site-determining protein MinC of Thermoanaerobacter pseudethanolicus (strain ATCC 33223 / 39E) (Clostridium thermohydrosulfuricum).